We begin with the raw amino-acid sequence, 357 residues long: Phosphate acyltransferase (357 aa).

It belongs to the PlsX family. As to quaternary structure, homodimer. Probably interacts with PlsY.

Its subcellular location is the cytoplasm. It carries out the reaction a fatty acyl-[ACP] + phosphate = an acyl phosphate + holo-[ACP]. Its pathway is lipid metabolism; phospholipid metabolism. Its function is as follows. Catalyzes the reversible formation of acyl-phosphate (acyl-PO(4)) from acyl-[acyl-carrier-protein] (acyl-ACP). This enzyme utilizes acyl-ACP as fatty acyl donor, but not acyl-CoA. In Herminiimonas arsenicoxydans, this protein is Phosphate acyltransferase.